The sequence spans 462 residues: tRNA-2-methylthio-N(6)-dimethylallyladenosine synthase (462 aa).

The MTTase N-terminal domain occupies 18–138; the sequence is RKVFVKTYGC…LPNALARVRS (121 aa). [4Fe-4S] cluster is bound by residues cysteine 27, cysteine 63, cysteine 101, cysteine 179, cysteine 183, and cysteine 186. The region spanning 165 to 397 is the Radical SAM core domain; that stretch reads RKRGVSAFLT…QALLSEQQYA (233 aa). Residues 400 to 462 form the TRAM domain; the sequence is DSMIGREMDV…TNSLIAQKLA (63 aa).

This sequence belongs to the methylthiotransferase family. MiaB subfamily. Monomer. The cofactor is [4Fe-4S] cluster.

The protein localises to the cytoplasm. It catalyses the reaction N(6)-dimethylallyladenosine(37) in tRNA + (sulfur carrier)-SH + AH2 + 2 S-adenosyl-L-methionine = 2-methylsulfanyl-N(6)-dimethylallyladenosine(37) in tRNA + (sulfur carrier)-H + 5'-deoxyadenosine + L-methionine + A + S-adenosyl-L-homocysteine + 2 H(+). Functionally, catalyzes the methylthiolation of N6-(dimethylallyl)adenosine (i(6)A), leading to the formation of 2-methylthio-N6-(dimethylallyl)adenosine (ms(2)i(6)A) at position 37 in tRNAs that read codons beginning with uridine. The chain is tRNA-2-methylthio-N(6)-dimethylallyladenosine synthase from Brucella anthropi (strain ATCC 49188 / DSM 6882 / CCUG 24695 / JCM 21032 / LMG 3331 / NBRC 15819 / NCTC 12168 / Alc 37) (Ochrobactrum anthropi).